The chain runs to 484 residues: Protein nucleotidyltransferase YdiU (484 aa).

Residues Gly-81, Gly-83, Arg-84, Lys-103, Asp-115, Gly-116, Arg-166, and Arg-173 each contribute to the ATP site. Asp-244 acts as the Proton acceptor in catalysis. 2 residues coordinate Mg(2+): Asn-245 and Asp-254. Asp-254 provides a ligand contact to ATP.

Belongs to the SELO family. Mg(2+) is required as a cofactor. The cofactor is Mn(2+).

It carries out the reaction L-seryl-[protein] + ATP = 3-O-(5'-adenylyl)-L-seryl-[protein] + diphosphate. The catalysed reaction is L-threonyl-[protein] + ATP = 3-O-(5'-adenylyl)-L-threonyl-[protein] + diphosphate. The enzyme catalyses L-tyrosyl-[protein] + ATP = O-(5'-adenylyl)-L-tyrosyl-[protein] + diphosphate. It catalyses the reaction L-histidyl-[protein] + UTP = N(tele)-(5'-uridylyl)-L-histidyl-[protein] + diphosphate. It carries out the reaction L-seryl-[protein] + UTP = O-(5'-uridylyl)-L-seryl-[protein] + diphosphate. The catalysed reaction is L-tyrosyl-[protein] + UTP = O-(5'-uridylyl)-L-tyrosyl-[protein] + diphosphate. In terms of biological role, nucleotidyltransferase involved in the post-translational modification of proteins. It can catalyze the addition of adenosine monophosphate (AMP) or uridine monophosphate (UMP) to a protein, resulting in modifications known as AMPylation and UMPylation. The protein is Protein nucleotidyltransferase YdiU of Shewanella sp. (strain MR-4).